The primary structure comprises 223 residues: Probable cytokinin riboside 5'-monophosphate phosphoribohydrolase LOGL1 (223 aa).

Substrate is bound by residues glutamate 89, 107–108 (RK), 124–130 (GYGTMEE), and threonine 136. The interval 201 to 223 (QEVAPRTSWEMSELGYGKTPEES) is disordered.

Belongs to the LOG family. In terms of tissue distribution, expressed in shoot apex, immature inflorescences and flowers.

The catalysed reaction is N(6)-(dimethylallyl)adenosine 5'-phosphate + H2O = N(6)-dimethylallyladenine + D-ribose 5-phosphate. It catalyses the reaction 9-ribosyl-trans-zeatin 5'-phosphate + H2O = trans-zeatin + D-ribose 5-phosphate. Functionally, cytokinin-activating enzyme working in the direct activation pathway. Phosphoribohydrolase that converts inactive cytokinin nucleotides to the biologically active free-base forms. This chain is Probable cytokinin riboside 5'-monophosphate phosphoribohydrolase LOGL1 (LOGL1), found in Oryza sativa subsp. japonica (Rice).